The primary structure comprises 509 residues: Activin receptor type-1 (509 aa).

An N-terminal signal peptide occupies residues Met-1–Ser-20. Residues Met-21–Glu-123 are Extracellular-facing. Residue Asn-102 is glycosylated (N-linked (GlcNAc...) asparagine). Residues Val-124–Leu-146 form a helical membrane-spanning segment. Residues Arg-147 to Cys-509 are Cytoplasmic-facing. The GS domain maps to Ser-178–Gln-207. A Protein kinase domain is found at Ile-208–Leu-502. Residues Val-214 to Val-222 and Lys-235 contribute to the ATP site. Residue Asp-336 is the Proton acceptor of the active site. The residue at position 501 (Ser-501) is a Phosphoserine.

This sequence belongs to the protein kinase superfamily. TKL Ser/Thr protein kinase family. TGFB receptor subfamily. In terms of assembly, interacts with FKBP1A. Interacts with FCHO1. Interacts with CLU. Interacts with type II receptors AMHR2 and ACVR2A. Interacts with BMP7. Interacts with BMP9. Interacts with BMP6 (when glycosylated); the interaction may induce HAMP expression. Interacts with TSC22D1/TSC-22. The cofactor is Mg(2+). It depends on Mn(2+) as a cofactor.

The protein localises to the membrane. It catalyses the reaction L-threonyl-[receptor-protein] + ATP = O-phospho-L-threonyl-[receptor-protein] + ADP + H(+). The enzyme catalyses L-seryl-[receptor-protein] + ATP = O-phospho-L-seryl-[receptor-protein] + ADP + H(+). In terms of biological role, bone morphogenetic protein (BMP) type I receptor that is involved in a wide variety of biological processes, including bone, heart, cartilage, nervous, and reproductive system development and regulation. As a type I receptor, forms heterotetrameric receptor complexes with the type II receptors AMHR2, ACVR2A ors ACVR2B. Upon binding of ligands such as BMP7 or BMP9 to the heteromeric complexes, type II receptors transphosphorylate ACVR1 intracellular domain. In turn, ACVR1 kinase domain is activated and subsequently phosphorylates SMAD1/5/8 proteins that transduce the signal. In addition to its role in mediating BMP pathway-specific signaling, suppresses TGFbeta/activin pathway signaling by interfering with the binding of activin to its type II receptor. Besides canonical SMAD signaling, can activate non-canonical signaling pathways. May promote the expression of HAMP, potentially via its interaction with BMP6. This Bos taurus (Bovine) protein is Activin receptor type-1 (ACVR1).